Here is a 168-residue protein sequence, read N- to C-terminus: Peptide deformylase (168 aa).

Fe cation-binding residues include Cys-92 and His-134. Glu-135 is an active-site residue. His-138 is a Fe cation binding site.

The protein belongs to the polypeptide deformylase family. It depends on Fe(2+) as a cofactor.

The catalysed reaction is N-terminal N-formyl-L-methionyl-[peptide] + H2O = N-terminal L-methionyl-[peptide] + formate. Its function is as follows. Removes the formyl group from the N-terminal Met of newly synthesized proteins. Requires at least a dipeptide for an efficient rate of reaction. N-terminal L-methionine is a prerequisite for activity but the enzyme has broad specificity at other positions. This chain is Peptide deformylase, found in Stutzerimonas stutzeri (strain A1501) (Pseudomonas stutzeri).